Consider the following 95-residue polypeptide: Co-chaperonin GroES (95 aa).

Belongs to the GroES chaperonin family. Heptamer of 7 subunits arranged in a ring. Interacts with the chaperonin GroEL.

The protein localises to the cytoplasm. Functionally, together with the chaperonin GroEL, plays an essential role in assisting protein folding. The GroEL-GroES system forms a nano-cage that allows encapsulation of the non-native substrate proteins and provides a physical environment optimized to promote and accelerate protein folding. GroES binds to the apical surface of the GroEL ring, thereby capping the opening of the GroEL channel. The sequence is that of Co-chaperonin GroES from Rhizorhabdus wittichii (strain DSM 6014 / CCUG 31198 / JCM 15750 / NBRC 105917 / EY 4224 / RW1) (Sphingomonas wittichii).